The following is a 297-amino-acid chain: Putative F-box protein At2g19630 (297 aa).

An F-box domain is found at 11-60; the sequence is TKNSLQIPIDLIIEIFLRLSVNSIARCRCVSKQWASTLSRPYFTELFLTR.

The polypeptide is Putative F-box protein At2g19630 (Arabidopsis thaliana (Mouse-ear cress)).